The following is a 125-amino-acid chain: C-X-C motif chemokine 9 (125 aa).

The signal sequence occupies residues 1 to 21; the sequence is MKKSAPLFLGIIFLTLTGVQG. 2 cysteine pairs are disulfide-bonded: C30–C57 and C32–C73. The disordered stretch occupies residues 91–125; it reads QVNQKKKQRKGKKYKKTKKVPKVKRSQRPSQKKTT. A compositionally biased stretch (basic residues) spans 93–125; the sequence is NQKKKQRKGKKYKKTKKVPKVKRSQRPSQKKTT.

It belongs to the intercrine alpha (chemokine CxC) family.

It localises to the secreted. Cytokine that affects the growth, movement, or activation state of cells that participate in immune and inflammatory response. Chemotactic for activated T-cells. Binds to CXCR3. The chain is C-X-C motif chemokine 9 (CXCL9) from Bos taurus (Bovine).